Reading from the N-terminus, the 213-residue chain is Large ribosomal subunit protein uL3 (213 aa).

An N5-methylglutamine modification is found at Q151.

It belongs to the universal ribosomal protein uL3 family. As to quaternary structure, part of the 50S ribosomal subunit. Forms a cluster with proteins L14 and L19. Methylated by PrmB.

Functionally, one of the primary rRNA binding proteins, it binds directly near the 3'-end of the 23S rRNA, where it nucleates assembly of the 50S subunit. This chain is Large ribosomal subunit protein uL3, found in Rhizobium johnstonii (strain DSM 114642 / LMG 32736 / 3841) (Rhizobium leguminosarum bv. viciae).